A 162-amino-acid chain; its full sequence is NADH-quinone oxidoreductase subunit I (162 aa).

4Fe-4S ferredoxin-type domains lie at 53–83 (LRRY…IEPE) and 93–122 (RRYD…EGPN). [4Fe-4S] cluster contacts are provided by Cys63, Cys66, Cys69, Cys73, Cys102, Cys105, Cys108, and Cys112.

It belongs to the complex I 23 kDa subunit family. As to quaternary structure, NDH-1 is composed of 14 different subunits. Subunits NuoA, H, J, K, L, M, N constitute the membrane sector of the complex. [4Fe-4S] cluster serves as cofactor.

It is found in the cell inner membrane. The enzyme catalyses a quinone + NADH + 5 H(+)(in) = a quinol + NAD(+) + 4 H(+)(out). Functionally, NDH-1 shuttles electrons from NADH, via FMN and iron-sulfur (Fe-S) centers, to quinones in the respiratory chain. The immediate electron acceptor for the enzyme in this species is believed to be ubiquinone. Couples the redox reaction to proton translocation (for every two electrons transferred, four hydrogen ions are translocated across the cytoplasmic membrane), and thus conserves the redox energy in a proton gradient. This is NADH-quinone oxidoreductase subunit I from Paramagnetospirillum magneticum (strain ATCC 700264 / AMB-1) (Magnetospirillum magneticum).